Here is a 278-residue protein sequence, read N- to C-terminus: NH(3)-dependent NAD(+) synthetase (278 aa).

Position 43-50 (43-50) interacts with ATP; that stretch reads GISGGVDS. Mg(2+) is bound at residue Asp49. Arg146 provides a ligand contact to deamido-NAD(+). ATP is bound at residue Thr166. Glu171 contributes to the Mg(2+) binding site. Positions 179 and 186 each coordinate deamido-NAD(+). The ATP site is built by Lys195 and Thr217. 266–267 serves as a coordination point for deamido-NAD(+); that stretch reads HK.

It belongs to the NAD synthetase family. As to quaternary structure, homodimer.

The enzyme catalyses deamido-NAD(+) + NH4(+) + ATP = AMP + diphosphate + NAD(+) + H(+). It participates in cofactor biosynthesis; NAD(+) biosynthesis; NAD(+) from deamido-NAD(+) (ammonia route): step 1/1. Its function is as follows. Catalyzes the ATP-dependent amidation of deamido-NAD to form NAD. Uses ammonia as a nitrogen source. This chain is NH(3)-dependent NAD(+) synthetase, found in Pseudoalteromonas translucida (strain TAC 125).